The primary structure comprises 1300 residues: ATP-dependent RNA helicase HrpA (1300 aa).

The region spanning Leu-87–Ser-250 is the Helicase ATP-binding domain. An ATP-binding site is contributed by Gly-100–Thr-107. The short motif at Asp-197–His-200 is the DEAH box element. The Helicase C-terminal domain occupies Gln-274–Gly-444.

The protein belongs to the DEAD box helicase family. DEAH subfamily.

The catalysed reaction is ATP + H2O = ADP + phosphate + H(+). Functionally, not yet known. The protein is ATP-dependent RNA helicase HrpA (hrpA) of Escherichia coli (strain K12).